The sequence spans 102 residues: Small ribosomal subunit protein uS10 (102 aa).

The protein belongs to the universal ribosomal protein uS10 family. Part of the 30S ribosomal subunit.

Involved in the binding of tRNA to the ribosomes. This Lactiplantibacillus plantarum (strain ATCC BAA-793 / NCIMB 8826 / WCFS1) (Lactobacillus plantarum) protein is Small ribosomal subunit protein uS10.